The chain runs to 163 residues: 6,7-dimethyl-8-ribityllumazine synthase (163 aa).

5-amino-6-(D-ribitylamino)uracil is bound by residues phenylalanine 27, 58 to 60 (ALE), and 87 to 89 (CVV). 92–93 (DT) contacts (2S)-2-hydroxy-3-oxobutyl phosphate. The Proton donor role is filled by histidine 95. Position 120 (asparagine 120) interacts with 5-amino-6-(D-ribitylamino)uracil. Residue arginine 134 coordinates (2S)-2-hydroxy-3-oxobutyl phosphate.

Belongs to the DMRL synthase family.

It carries out the reaction (2S)-2-hydroxy-3-oxobutyl phosphate + 5-amino-6-(D-ribitylamino)uracil = 6,7-dimethyl-8-(1-D-ribityl)lumazine + phosphate + 2 H2O + H(+). The protein operates within cofactor biosynthesis; riboflavin biosynthesis; riboflavin from 2-hydroxy-3-oxobutyl phosphate and 5-amino-6-(D-ribitylamino)uracil: step 1/2. Catalyzes the formation of 6,7-dimethyl-8-ribityllumazine by condensation of 5-amino-6-(D-ribitylamino)uracil with 3,4-dihydroxy-2-butanone 4-phosphate. This is the penultimate step in the biosynthesis of riboflavin. This Nitrobacter winogradskyi (strain ATCC 25391 / DSM 10237 / CIP 104748 / NCIMB 11846 / Nb-255) protein is 6,7-dimethyl-8-ribityllumazine synthase.